We begin with the raw amino-acid sequence, 463 residues long: Fumarate hydratase class II (463 aa).

Substrate-binding positions include 98–100 (SGT), 129–132 (HPND), 139–141 (SSN), and T187. Residue H188 is the Proton donor/acceptor of the active site. S318 is an active-site residue. Residues S319 and 324–326 (KVN) each bind substrate.

The protein belongs to the class-II fumarase/aspartase family. Fumarase subfamily. As to quaternary structure, homotetramer.

The protein resides in the cytoplasm. It catalyses the reaction (S)-malate = fumarate + H2O. Its pathway is carbohydrate metabolism; tricarboxylic acid cycle; (S)-malate from fumarate: step 1/1. In terms of biological role, involved in the TCA cycle. Catalyzes the stereospecific interconversion of fumarate to L-malate. This Rickettsia bellii (strain RML369-C) protein is Fumarate hydratase class II.